The following is a 299-amino-acid chain: Protease HtpX homolog (299 aa).

2 helical membrane-spanning segments follow: residues 15–35 and 39–59; these read ILLL…GYLF and GLGG…SMIF. Position 143 (histidine 143) interacts with Zn(2+). The active site involves glutamate 144. A Zn(2+)-binding site is contributed by histidine 147. Helical transmembrane passes span 158-178 and 198-218; these read IAVA…RMMW and IIML…ATLV. Residue glutamate 227 coordinates Zn(2+).

It belongs to the peptidase M48B family. The cofactor is Zn(2+).

The protein resides in the cell membrane. The chain is Protease HtpX homolog from Streptococcus pneumoniae serotype 4 (strain ATCC BAA-334 / TIGR4).